The sequence spans 60 residues: Mastoparan-VB2 (60 aa).

The signal sequence occupies residues 1–27 (MKNTILLLFTAFIFLMGFFGMSADALA). AXPX repeat units follow at residues 27–30 (ADPK), 31–34 (ADPL), 35–38 (AGPF), and 41–44 (ADPD). A propeptide spanning residues 28–45 (DPKADPLAGPFPDADPDP) is cleaved from the precursor. A Leucine amide modification is found at Leu59.

Belongs to the MCD family. Mastoparan subfamily. As to expression, expressed by the venom gland.

It is found in the secreted. It localises to the target cell membrane. Functionally, antimicrobial peptide. Shows activity against both Gram-positive and -negative bacteria, as well against fungi. Also promotes moderate mast cell degranulation. Does not show hemolytic activity on rabbit and human erythrocytes. Its mast cell degranulation activity may be related to the activation of G-protein coupled receptors in mast cells as well as interaction with other proteins located in cell endosomal membranes in the mast cells. The chain is Mastoparan-VB2 from Vespa bicolor (Black shield wasp).